A 20-amino-acid polypeptide reads, in one-letter code: U27-ctenitoxin-Pn1a (20 aa).

A disordered region spans residues 1–20 (LAKRADICQPGKTSQRACET). A compositionally biased stretch (polar residues) spans 11–20 (GKTSQRACET).

Contains 4 disulfide bonds. As to expression, expressed by the venom gland.

It localises to the secreted. Its function is as follows. Has a vascular smooth muscle contracting activity. Causes short-lived contractions of both arterial and venous rabbit vessels. This is U27-ctenitoxin-Pn1a from Phoneutria nigriventer (Brazilian armed spider).